The sequence spans 397 residues: Tryptophan synthase beta chain 1 (397 aa).

At Lys90 the chain carries N6-(pyridoxal phosphate)lysine.

Belongs to the TrpB family. Tetramer of two alpha and two beta chains. Pyridoxal 5'-phosphate is required as a cofactor.

The catalysed reaction is (1S,2R)-1-C-(indol-3-yl)glycerol 3-phosphate + L-serine = D-glyceraldehyde 3-phosphate + L-tryptophan + H2O. It participates in amino-acid biosynthesis; L-tryptophan biosynthesis; L-tryptophan from chorismate: step 5/5. In terms of biological role, the beta subunit is responsible for the synthesis of L-tryptophan from indole and L-serine. This Aquifex aeolicus (strain VF5) protein is Tryptophan synthase beta chain 1 (trpB1).